A 402-amino-acid polypeptide reads, in one-letter code: Selenoprotein P (402 aa).

Residues 1–19 form the signal peptide; that stretch reads MWRGLGLALALCLLLTGGT. A non-standard amino acid (selenocysteine) is located at residue U59. N83 and N174 each carry an N-linked (GlcNAc...) asparagine glycan. Positions 196–291 are disordered; it reads KTAEASQRHH…VGSESLQPSL (96 aa). A compositionally biased stretch (basic residues) spans 203-231; that stretch reads RHHHPHPHSHPHPHPHPHPHPHPHPHHGH. 13 consecutive repeat copies span residues 204–205, 206–207, 208–209, 210–211, 212–213, 214–215, 216–217, 218–219, 220–221, 222–223, 224–225, 226–227, and 228–229. Residues 204 to 229 form a 13 X 2 AA tandem repeats of H-[PHS] region; that stretch reads HHHPHPHSHPHPHPHPHPHPHPHPHH. The segment covering 232–247 has biased composition (basic and acidic residues); it reads QLHENAHLSESPKPDT. The span at 259 to 269 shows a compositional bias: basic residues; the sequence is LHHHHHRHKGP. S284 carries the post-translational modification Phosphoserine. Non-standard amino acids (selenocysteine) are located at U297, U307, U338, U350, U363, U365, U372, U388, U390, U397, and U399. Residues 367–402 form a disordered region; that stretch reads LPPAAUQAAGQQLNPTEASTKUSUKNKAKMUKUPSN.

The protein belongs to the selenoprotein P family. Post-translationally, phosphorylation sites are present in the extracellular medium. As to expression, brain and kidney. Most prominently expressed in the cerebellar cortex, hippocampus and olfactory bulb.

The protein localises to the secreted. In terms of biological role, constitutes a major selenium pool in the brain and may play an important role in developing and/or modulating the morphology of neurons and/or glial cells. The sequence is that of Selenoprotein P from Bos taurus (Bovine).